A 551-amino-acid polypeptide reads, in one-letter code: Prunin 1 Pru du 6 (551 aa).

The signal sequence occupies residues 1–20 (MAKAFVFSLCLLLVFNGCLA). Intrachain disulfides connect cysteine 32–cysteine 65 and cysteine 108–cysteine 374. One can recognise a Cupin type-1 1 domain in the interval 37-312 (LQAREPDNRI…ALNVNEETAR (276 aa)). Disordered stretches follow at residues 111–194 (TFEE…QKTR), 238–293 (NPRK…NVFS), and 329–360 (GNLD…RQQQ). Low complexity-rich tracts occupy residues 114–124 (ESQQSSQQGRQ), 132–148 (QQQQ…QQEQ), and 168–185 (QEQQ…QQFR). Residue arginine 194 coordinates Ca(2+). Positions 254–275 (QQGQSQPRQQGEQGRPGQHQQP) are enriched in low complexity. Residues 282–293 (QEQQGNGNNVFS) are compositionally biased toward polar residues. Basic and acidic residues predominate over residues 339 to 350 (GRQEREHEERQQ). The span at 351 to 360 (EQLQQERQQQ) shows a compositional bias: low complexity. The NGXEET; peptidase recognition motif signature appears at 367–372 (NGLEET). Residues 380-529 (ENIGNPERAD…AYQISREQAR (150 aa)) enclose the Cupin type-1 2 domain.

Belongs to the 11S seed storage protein (globulins) family. In terms of assembly, hexamer of two trimers; each subunit is composed of an acidic and a basic chain derived from a single precursor and linked by a disulfide bond. Post-translationally, proteolytically processed from a single precursor to produce an acidic and a basic chain that are linked by a disulfide bond. As to expression, expressed in seed (at protein level). Expressed in seed.

Seed storage protein. The chain is Prunin 1 Pru du 6 from Prunus dulcis (Almond).